We begin with the raw amino-acid sequence, 884 residues long: Schlafen family member 5 (884 aa).

574 to 581 is an ATP binding site; the sequence is GLPGSGKT.

The protein belongs to the Schlafen family. Subgroup III subfamily.

May have a role in hematopoietic cell differentiation. This is Schlafen family member 5 (Slfn5) from Mus musculus (Mouse).